Consider the following 579-residue polypeptide: Suppressor of cytokine signaling 7 (579 aa).

Disordered stretches follow at residues 1 to 25, 89 to 270, and 295 to 315; these read MVFRNVGRPPEEEDAEAAREPGPSE, PPPP…RTQS, and QRGLTSPHPPTPPPPPRRSLS. Pro residues-rich tracts occupy residues 89–99, 155–165, and 185–196; these read PPPPQPPPPAA, PPGPELPPVPF, and QPPPPPPPPGPL. Positions 124–492 are mediates interaction with SORBS3; it reads AESLETNSCS…GKFLYFLRSR (369 aa). A compositionally biased stretch (basic residues) spans 206–217; that stretch reads GSFKIRLSRLFR. Residues 301–311 are compositionally biased toward pro residues; the sequence is PHPPTPPPPPR. The SH2 domain occupies 398–507; the sequence is WYWGPMNWED…PTPVQLLYPV (110 aa). Residues 502-552 enclose the SOCS box domain; the sequence is QLLYPVSRFSNVKSLQHLCRFRIRQLVRIDHIPDLPLPKPLISYIRKFYYY.

Substrate-recognition component of the ECS(SOCS7) complex, composed of SOCS7, CUL5, ELOB, ELOC and RNF7/RBX2. Interacts, via the third proline-rich region, with the second SH3 domain of the adapter protein NCK1. Also interacts with GRB2, INSR, PLCG1, SORBS3/vinexin, and phosphorylated STAT3 and STAT5. Interacts with SEPT6. Interacts with phosphorylated IRS4 and PIK3R1. In terms of tissue distribution, widely expressed with higher expression in brain and testis where it is expressed by spermatocytes and early spermatids. Also significantly expressed in spleen, skeletal muscle and kidney.

Its subcellular location is the cytoplasm. It is found in the nucleus. It localises to the cell membrane. The protein operates within protein modification; protein ubiquitination. Functionally, substrate-recognition component of a cullin-5-RING E3 ubiquitin-protein ligase complex (ECS complex, also named CRL5 complex), which mediates the ubiquitination and subsequent proteasomal degradation of target proteins, such as DAB1 and IRS1. Specifically recognizes and binds phosphorylated proteins via its SH2 domain, promoting their ubiquitination. The ECS(SOCS7) complex acts as a key regulator of reelin signaling by mediating ubiquitination and degradation of phosphorylated DAB1 in the cortical plate of the developing cerebral cortex, thereby regulating neuron positioning during cortex development. Functions in insulin signaling and glucose homeostasis through IRS1 ubiquitination and subsequent proteasomal degradation. Also inhibits prolactin, growth hormone and leptin signaling by preventing STAT3 and STAT5 activation, sequestering them in the cytoplasm and reducing their binding to DNA. The sequence is that of Suppressor of cytokine signaling 7 from Mus musculus (Mouse).